A 215-amino-acid polypeptide reads, in one-letter code: Cytochrome b6 (215 aa).

Residues 32–52 traverse the membrane as a helical segment; that stretch reads IFYCLGGITLVCFLIQFATGF. C35 is a binding site for heme c. Heme b is bound by residues H86 and H100. The next 3 helical transmembrane spans lie at 90–110, 116–136, and 186–206; these read ASMMVLMMILHTFRVYLTGGF, LTWVTGVILAVLTVSFGVTGY, and LHTFVLPWLTAVFMTMHFLMI. H187 and H202 together coordinate heme b.

This sequence belongs to the cytochrome b family. PetB subfamily. In terms of assembly, the 4 large subunits of the cytochrome b6-f complex are cytochrome b6, subunit IV (17 kDa polypeptide, PetD), cytochrome f and the Rieske protein, while the 4 small subunits are PetG, PetL, PetM and PetN. The complex functions as a dimer. Heme b is required as a cofactor. It depends on heme c as a cofactor.

It is found in the cellular thylakoid membrane. Component of the cytochrome b6-f complex, which mediates electron transfer between photosystem II (PSII) and photosystem I (PSI), cyclic electron flow around PSI, and state transitions. This Synechococcus sp. (strain JA-3-3Ab) (Cyanobacteria bacterium Yellowstone A-Prime) protein is Cytochrome b6.